Here is a 507-residue protein sequence, read N- to C-terminus: Ribose import ATP-binding protein RbsA (507 aa).

ABC transporter domains are found at residues 7 to 242 (LEMR…VGRP) and 253 to 497 (IPLG…TGVT). 39–46 (GENGAGKS) provides a ligand contact to ATP.

Belongs to the ABC transporter superfamily. Ribose importer (TC 3.A.1.2.1) family. The complex is composed of an ATP-binding protein (RbsA), two transmembrane proteins (RbsC) and a solute-binding protein (RbsB).

The protein resides in the cell inner membrane. The catalysed reaction is D-ribose(out) + ATP + H2O = D-ribose(in) + ADP + phosphate + H(+). Functionally, part of the ABC transporter complex RbsABC involved in ribose import. Responsible for energy coupling to the transport system. This is Ribose import ATP-binding protein RbsA from Yersinia pestis bv. Antiqua (strain Antiqua).